The sequence spans 187 residues: Lysozyme 3 (187 aa).

The N-terminal stretch at 1 to 18 (MNGLFLFCVATTAALAYG) is a signal peptide. One can recognise an I-type lysozyme domain in the interval 68–183 (TGIVSQQCLQ…WSHVHAQGCS (116 aa)). 6 disulfide bridges follow: Cys75/Cys151, Cys80/Cys86, Cys91/Cys100, Cys113/Cys133, Cys123/Cys129, and Cys147/Cys165. The active-site Proton donor is the Glu83. Residue Asp94 is the Nucleophile of the active site. 106–112 (KEGYWHD) is a substrate binding site. Residues Tyr137 and 158–160 (HNG) contribute to the substrate site.

As to expression, highest levels of expression detected in the digestive glands. Lower levels in the mantle, labial palps, gills and style-midgut sac, and lowest levels detected in the hemocytes. Not detected in the gonads.

It is found in the secreted. It carries out the reaction Hydrolysis of (1-&gt;4)-beta-linkages between N-acetylmuramic acid and N-acetyl-D-glucosamine residues in a peptidoglycan and between N-acetyl-D-glucosamine residues in chitodextrins.. Functionally, has antibacterial activity against the Gram-negative bacterium E.coli. No antibacterial activity detected against the Gram-negative bacterium V.vulnificus. The polypeptide is Lysozyme 3 (Crassostrea virginica (Eastern oyster)).